The primary structure comprises 329 residues: Replication factor C small subunit (329 aa).

51–58 (GPPGTGKT) provides a ligand contact to ATP.

This sequence belongs to the activator 1 small subunits family. RfcS subfamily. As to quaternary structure, heteromultimer composed of small subunits (RfcS) and large subunits (RfcL).

Part of the RFC clamp loader complex which loads the PCNA sliding clamp onto DNA. This is Replication factor C small subunit from Staphylothermus marinus (strain ATCC 43588 / DSM 3639 / JCM 9404 / F1).